Reading from the N-terminus, the 152-residue chain is Methylglyoxal synthase (152 aa).

Positions 6–152 constitute an MGS-like domain; the sequence is RTMATAKNIA…YQHYLNGRLK (147 aa). Substrate contacts are provided by residues H19, K23, 45-48, and 65-66; these read TGTT and SG. Residue D71 is the Proton donor/acceptor of the active site. H98 is a binding site for substrate.

The protein belongs to the methylglyoxal synthase family.

It catalyses the reaction dihydroxyacetone phosphate = methylglyoxal + phosphate. Its function is as follows. Catalyzes the formation of methylglyoxal from dihydroxyacetone phosphate. The chain is Methylglyoxal synthase from Photorhabdus laumondii subsp. laumondii (strain DSM 15139 / CIP 105565 / TT01) (Photorhabdus luminescens subsp. laumondii).